Consider the following 571-residue polypeptide: Arginine--tRNA ligase (571 aa).

A 'HIGH' region motif is present at residues 122–132; it reads PNIAKEMHVGH.

The protein belongs to the class-I aminoacyl-tRNA synthetase family. In terms of assembly, monomer.

It localises to the cytoplasm. The catalysed reaction is tRNA(Arg) + L-arginine + ATP = L-arginyl-tRNA(Arg) + AMP + diphosphate. In Buchnera aphidicola subsp. Cinara cedri (strain Cc), this protein is Arginine--tRNA ligase.